The sequence spans 277 residues: MAIKKYKPTSNGRRGMTTSDFAEITTDQPEKSLLAPLHKKGGRNNQGKLTVRHQGGGHKRQYRVIDFKRDKDGIPGRVATVEYDPNRSANIALINYVDGEKRYILAPKGIQVGTEIMSGPEADIKVGNALPLINIPVGTVVHNIELKPGKGGQLVRSAGTSAQVLGKEGKYVLVRLNSGEVRMILSACRASIGQVGNEQHELINVGKAGRSRWKGIRPTVRGSVMNPNDHPHGGGEGRAPIGRKSPMSPWGKPTLGFKTRKKKNKSDKFIVRRRKNK.

Disordered regions lie at residues 36 to 58 (PLHK…GGGH) and 219 to 277 (TVRG…RKNK). Residues 258–277 (KTRKKKNKSDKFIVRRRKNK) show a composition bias toward basic residues.

It belongs to the universal ribosomal protein uL2 family. Part of the 50S ribosomal subunit. Forms a bridge to the 30S subunit in the 70S ribosome.

Its function is as follows. One of the primary rRNA binding proteins. Required for association of the 30S and 50S subunits to form the 70S ribosome, for tRNA binding and peptide bond formation. It has been suggested to have peptidyltransferase activity; this is somewhat controversial. Makes several contacts with the 16S rRNA in the 70S ribosome. The sequence is that of Large ribosomal subunit protein uL2 from Bacillus velezensis (strain DSM 23117 / BGSC 10A6 / LMG 26770 / FZB42) (Bacillus amyloliquefaciens subsp. plantarum).